Here is a 131-residue protein sequence, read N- to C-terminus: Holo-[acyl-carrier-protein] synthase (131 aa).

Residues Asp8 and Glu63 each coordinate Mg(2+).

It belongs to the P-Pant transferase superfamily. AcpS family. Mg(2+) is required as a cofactor.

The protein resides in the cytoplasm. The catalysed reaction is apo-[ACP] + CoA = holo-[ACP] + adenosine 3',5'-bisphosphate + H(+). Functionally, transfers the 4'-phosphopantetheine moiety from coenzyme A to a Ser of acyl-carrier-protein. This Shewanella pealeana (strain ATCC 700345 / ANG-SQ1) protein is Holo-[acyl-carrier-protein] synthase.